The primary structure comprises 495 residues: N-succinylglutamate 5-semialdehyde dehydrogenase (495 aa).

228–233 (GSYATG) lines the NAD(+) pocket. Active-site residues include Glu251 and Cys285.

It belongs to the aldehyde dehydrogenase family. AstD subfamily.

It catalyses the reaction N-succinyl-L-glutamate 5-semialdehyde + NAD(+) + H2O = N-succinyl-L-glutamate + NADH + 2 H(+). Its pathway is amino-acid degradation; L-arginine degradation via AST pathway; L-glutamate and succinate from L-arginine: step 4/5. Catalyzes the NAD-dependent reduction of succinylglutamate semialdehyde into succinylglutamate. In Legionella pneumophila (strain Paris), this protein is N-succinylglutamate 5-semialdehyde dehydrogenase.